Here is a 125-residue protein sequence, read N- to C-terminus: Large ribosomal subunit protein bL12 (125 aa).

It belongs to the bacterial ribosomal protein bL12 family. As to quaternary structure, homodimer. Part of the 50S ribosomal subunit; present in 6 copies per ribosome. Forms part of the ribosomal stalk which helps the ribosome interact with GTP-bound translation factors. Forms a heptameric L10(L12)2(L12)2(L12)2 complex, where L10 forms an elongated spine to which 3 L12 dimers bind in a sequential fashion.

Its function is as follows. Forms part of the ribosomal stalk which helps the ribosome interact with GTP-bound translation factors. Is thus essential for accurate translation. The polypeptide is Large ribosomal subunit protein bL12 (Agrobacterium fabrum (strain C58 / ATCC 33970) (Agrobacterium tumefaciens (strain C58))).